Here is an 865-residue protein sequence, read N- to C-terminus: AdoMet-dependent rRNA methyltransferase SPB1 (865 aa).

Residues Gly-56, Trp-58, Asp-76, Asp-92, and Asp-117 each coordinate S-adenosyl-L-methionine. The Proton acceptor role is filled by Lys-157. Coiled coils occupy residues 358 to 400 (ESMD…VRMQ) and 462 to 492 (GETD…RKAA). Disordered regions lie at residues 370-396 (LEKL…QKDI) and 443-676 (VVAS…TKDG). A compositionally biased stretch (basic and acidic residues) spans 386 to 396 (RKENERKQKDI). The segment covering 463–483 (ETDDESDEELDRLETELDDMY) has biased composition (acidic residues). A compositionally biased stretch (basic and acidic residues) spans 484-497 (DQFRERKAASDAKY). Positions 526 to 545 (ISDDSELEEESSGDSDDEDD) are enriched in acidic residues. Residues 556–566 (LDTTPSDNSGL) show a composition bias toward polar residues. A compositionally biased stretch (acidic residues) spans 600-609 (GEDEDADMED). 2 stretches are compositionally biased toward basic and acidic residues: residues 610 to 627 (TVSK…ADKK) and 659 to 676 (KSGK…TKDG). Residues 762-789 (REAKGRKKMKAAQRLEKLKKKSDLLVNE) adopt a coiled-coil conformation.

This sequence belongs to the class I-like SAM-binding methyltransferase superfamily. RNA methyltransferase RlmE family. SPB1 subfamily. In terms of assembly, component of the nucleolar and nucleoplasmic pre-60S ribosomal particle.

The protein resides in the nucleus. It localises to the nucleolus. It catalyses the reaction a ribonucleotide in rRNA + S-adenosyl-L-methionine = a 2'-O-methylribonucleotide in rRNA + S-adenosyl-L-homocysteine + H(+). Required for proper assembly of pre-ribosomal particles during the biogenesis of the 60S ribosomal subunit. The sequence is that of AdoMet-dependent rRNA methyltransferase SPB1 from Pyricularia oryzae (strain 70-15 / ATCC MYA-4617 / FGSC 8958) (Rice blast fungus).